Here is a 259-residue protein sequence, read N- to C-terminus: NAD kinase (259 aa).

Asp49 acts as the Proton acceptor in catalysis. Residues 49 to 50 (DG), Arg54, 118 to 119 (NE), Asp148, Ala156, 159 to 164 (TAYNYS), and Ala183 each bind NAD(+).

It belongs to the NAD kinase family. Requires a divalent metal cation as cofactor.

Its subcellular location is the cytoplasm. It carries out the reaction NAD(+) + ATP = ADP + NADP(+) + H(+). Involved in the regulation of the intracellular balance of NAD and NADP, and is a key enzyme in the biosynthesis of NADP. Catalyzes specifically the phosphorylation on 2'-hydroxyl of the adenosine moiety of NAD to yield NADP. This chain is NAD kinase, found in Xylella fastidiosa (strain 9a5c).